Here is a 263-residue protein sequence, read N- to C-terminus: 4-hydroxy-2-oxo-heptane-1,7-dioate aldolase (263 aa).

His-45 (proton acceptor) is an active-site residue. Gln-147 provides a ligand contact to substrate. Glu-149 lines the a divalent metal cation pocket. The substrate site is built by Ala-174 and Asp-175. Asp-175 lines the a divalent metal cation pocket.

This sequence belongs to the HpcH/HpaI aldolase family. In terms of assembly, homohexamer; trimer of dimers. A divalent metal cation serves as cofactor.

The catalysed reaction is 4-hydroxy-2-oxoheptanedioate = succinate semialdehyde + pyruvate. It participates in aromatic compound metabolism; 4-hydroxyphenylacetate degradation; pyruvate and succinate semialdehyde from 4-hydroxyphenylacetate: step 7/7. Functionally, catalyzes the reversible retro-aldol cleavage of 4-hydroxy-2-ketoheptane-1,7-dioate (HKHD) to pyruvate and succinic semialdehyde. The sequence is that of 4-hydroxy-2-oxo-heptane-1,7-dioate aldolase from Salmonella newport (strain SL254).